The primary structure comprises 158 residues: Protein-export protein SecB (158 aa).

It belongs to the SecB family. In terms of assembly, homotetramer, a dimer of dimers. One homotetramer interacts with 1 SecA dimer.

It localises to the cytoplasm. One of the proteins required for the normal export of preproteins out of the cell cytoplasm. It is a molecular chaperone that binds to a subset of precursor proteins, maintaining them in a translocation-competent state. It also specifically binds to its receptor SecA. The chain is Protein-export protein SecB from Photorhabdus laumondii subsp. laumondii (strain DSM 15139 / CIP 105565 / TT01) (Photorhabdus luminescens subsp. laumondii).